The following is a 209-amino-acid chain: V-type ATP synthase subunit D (209 aa).

The protein belongs to the V-ATPase D subunit family.

Functionally, produces ATP from ADP in the presence of a proton gradient across the membrane. In Chlamydia pneumoniae (Chlamydophila pneumoniae), this protein is V-type ATP synthase subunit D (atpD).